The following is an 81-amino-acid chain: Costars family protein ABRACL (81 aa).

N-acetylmethionine is present on methionine 1.

The protein belongs to the costars family.

The protein is Costars family protein ABRACL (ABRACL) of Bos taurus (Bovine).